A 436-amino-acid chain; its full sequence is Nucleolar protein 4-like (436 aa).

The interval 1 to 184 (MSDSTWMSAD…KMNDSEGMDP (184 aa)) is disordered. A compositionally biased stretch (low complexity) spans 41 to 61 (SESGSGNGSSTLNPSTSSSTQ). Ser130 is subject to Phosphoserine. Acidic residues predominate over residues 160–169 (ADDDDDDHDD). Basic and acidic residues predominate over residues 170–184 (HEDNDKMNDSEGMDP). At Ser295 the chain carries Phosphoserine. Residues 351–366 (QPPASLQTGNHSNGPT) show a composition bias toward polar residues. The segment at 351–400 (QPPASLQTGNHSNGPTDLSMKGGASTTSTTPTPTPSSTSTSRPVPTAQLS) is disordered. The span at 375 to 396 (STTSTTPTPTPSSTSTSRPVPT) shows a compositional bias: low complexity.

This is Nucleolar protein 4-like (NOL4L) from Homo sapiens (Human).